A 1270-amino-acid polypeptide reads, in one-letter code: MAIIDTTKDLSALFTQQVRASPNALALEDDKTSYTYAELDKEVEELSRRLRSYGVSRDSLVGVLLPRSAHFVIACLAALRAGGAFLVLELAYPPDLLADVLEDATPAVVVTHRSETGKIKGSVPVISLDEPPVDANGHTVEPGPLPVDDDLDRLAFVSYSSGTTGKPKGIANPHRAPVLSYNLRFGVQDLQPGDRVACNVFFIWEILRPLIRGATVVAVPDDHSYDPAALVDLLASRHITETLMTPTLLATILSRHSDIGARLPELRTLWLNGEVVTTDLARRAIRALPNTRLLNCYSACETHEIACGDIKEIVSDESQYCPVGPLLDPKHAYIVNEQGEKVEEGVSGELCVGGPMLARGYINRPETTAKAFIPDPFSNSPGAVMYRTGDRARMLPSGLLEITGRVGAMIKLRGYSVVPGKVENDIVKHLAVRQCAVVAHGEGLERQLVAYIVADQEHSEERPTVEINSSGHSPGARRALTKFLAHYMIPALWVQVDELPTHEVSGKIDLKRLPPPPTEVLANGNGKKEDPIGIEDIAAIWAVALKVPKATLKPEDNFFDLGGHSLSIADLSSRLSRKFGFRIPIVRLAENSTLSGHLDTVRAIRDGHTAAVQADLPAVLRTDATLDEEIRSDAKICSLTDAKTVLLTGVTGFLGAFLLKDLVDSTSAHIICLVRFNEPEDDDQPGGVARIRRNLLDLGLWNDSIMERVEILPGNLSRSRFGLTPDAFQELAQRVDVIVHAAASVNLVYPYAALRAANVGGTREILRLASQGGATVQYVSTNGVLPPSGEKGWPEDTMLDMKDVPTKLLDGYGQTKWVAEQLVLEAGRRGLPVRVHRIGTVSGHSQSGAANAWDLLTALIVESIKLGKYPDVEGWRAEMTPVDFVSKAIIHLANQTAVEQTVFHIGDPDPVNTRSVFEDLKTLGYPTEPLSWDDWVALWTSQRGHVKGGDGGFTVDILRSGMPSIEFLRGIVVLDNSATRPIRREVERPKVDRFLLETYTRHWFARGWLKRPPIRQRQLSPIPKGPLSGKVAVVTGASSGIGAAVATALAREGAHVALGARRLDALESLKEKLSASGVKVVTCKTDVTDRKQVEGLVKAATEELGPVDILVACAGVMYFTMMANTQMDEWERTVDVNCKGILNSLASTVPGMLARGKGHVVAISSDAGRKVFPGLGVYSASKFFVEATLQALRLETAGQGLRVTAVQPGNTATDLLGMSTDAEAIKKYGEPSGAQILDPEDVANSIIYALRQPEHVAMNEILIEPRDEPI.

An adenylation (A) domain region spans residues 14-418 (FTQQVRASPN…MIKLRGYSVV (405 aa)). Residues 528–605 (KEDPIGIEDI…GHLDTVRAIR (78 aa)) enclose the Carrier domain. S565 is subject to O-(pantetheine 4'-phosphoryl)serine. The segment at 643–937 (KTVLLTGVTG…EPLSWDDWVA (295 aa)) is carboxylic acid reductase domain R1. The aldehyde reductase domain R2 stretch occupies residues 1026 to 1256 (PLSGKVAVVT…IYALRQPEHV (231 aa)).

Belongs to the NRP synthetase family.

Its activity is regulated as follows. The tetramethylammonium ion, which mimics the head group of glycine betaine, acts as a competitive inhibitor of ATRR A domain, whereas the potency decreased by three orders of magnitude with dimethylammonium. Choline is a mixed inhibitor for both glycine betaine reductase and aldehyde reductase activity but more potent in competition against glycine betaine in the first reduction step. Therefore, choline could act as a feedback inhibitor to regulate ATRR enzymatic activity. The lowered binding affinity of choline to R2 favors the release of choline after glycine betaine aldehyde reduction to avoid direct product inhibition. Functionally, NRPS-like enzyme with an unusual domain architecture that converts back glycine betaine to choline via a 2-step reduction mechanism, and thereby can be an alternative source of choline. Permits direct reutilization of endogenously stored glycine betaine for on-demand biosynthesis of choline and choline derivatives, including phospholipid phosphatidylcholine (PC) which has an essential role in maintaining membrane integrity and functionality, or choline-O-sulfate, a mean for intracellular sulfate storage. Glycine betaine is activated by the adenylation (A) domain, and transferred to the thiolation (T) domain. Movement of the phosphopantetheine arm to the thioester reductase domain R1 then allows thioester reduction by NADPH of glycine betainoyl thioester to glycine betaine aldehyde, which is in turn reduced to choline by the aldehyde reductase domain R2. The chain is Glycine betaine reductase ATRR from Emericella nidulans (strain FGSC A4 / ATCC 38163 / CBS 112.46 / NRRL 194 / M139) (Aspergillus nidulans).